Here is a 790-residue protein sequence, read N- to C-terminus: Pentatricopeptide repeat-containing protein At1g25360 (790 aa).

16 PPR repeats span residues 48–82 (RAHI…DKIA), 84–109 (TTMV…APVC), 112–146 (DTVM…GFKP), 147–182 (DNFT…GAGY), 183–217 (ITSV…ILEK), 218–248 (DERS…MDDN), 250–284 (KLVA…GIEL), 285–315 (DEFT…VLRR), 319–349 (SFHF…MPAK), 350–384 (DLVS…NILS), 385–415 (WMIM…GFEP), 416–450 (CDYA…GFDS), 451–481 (SLSA…MPCL), 482–516 (DSVS…GIRP), 517–551 (DRIT…YRIP), and 553–583 (GADH…LPFK). The tract at residues 588 to 663 (IWEALLSGCR…EVACSWIEME (76 aa)) is type E motif. A type E(+) motif region spans residues 664 to 694 (TQVHTFLVDDTSHPEAEAVYIYLQDLGKEMR). The tract at residues 695–790 (RLGYVPDTSF…NGECSCGNFW (96 aa)) is type DYW motif.

Belongs to the PPR family. PCMP-H subfamily.

In Arabidopsis thaliana (Mouse-ear cress), this protein is Pentatricopeptide repeat-containing protein At1g25360 (PCMP-H74).